Here is a 273-residue protein sequence, read N- to C-terminus: 4-hydroxy-tetrahydrodipicolinate reductase (273 aa).

NAD(+)-binding positions include 12 to 17 (GAGGRM) and glutamate 38. Position 39 (arginine 39) interacts with NADP(+). NAD(+) contacts are provided by residues 102-104 (GTT) and 126-129 (AANF). The active-site Proton donor/acceptor is histidine 159. Histidine 160 contacts (S)-2,3,4,5-tetrahydrodipicolinate. Lysine 163 acts as the Proton donor in catalysis. 169–170 (GT) contributes to the (S)-2,3,4,5-tetrahydrodipicolinate binding site.

It belongs to the DapB family. Homotetramer.

It is found in the cytoplasm. The enzyme catalyses (S)-2,3,4,5-tetrahydrodipicolinate + NAD(+) + H2O = (2S,4S)-4-hydroxy-2,3,4,5-tetrahydrodipicolinate + NADH + H(+). It carries out the reaction (S)-2,3,4,5-tetrahydrodipicolinate + NADP(+) + H2O = (2S,4S)-4-hydroxy-2,3,4,5-tetrahydrodipicolinate + NADPH + H(+). It participates in amino-acid biosynthesis; L-lysine biosynthesis via DAP pathway; (S)-tetrahydrodipicolinate from L-aspartate: step 4/4. In terms of biological role, catalyzes the conversion of 4-hydroxy-tetrahydrodipicolinate (HTPA) to tetrahydrodipicolinate. The chain is 4-hydroxy-tetrahydrodipicolinate reductase from Yersinia pestis bv. Antiqua (strain Antiqua).